Consider the following 331-residue polypeptide: UDP-N-acetylenolpyruvoylglucosamine reductase (331 aa).

The FAD-binding PCMH-type domain occupies 54 to 221 (RVGGAAELYV…TQATFQLQPG (168 aa)). Residue Arg-200 is part of the active site. Ser-251 (proton donor) is an active-site residue. The active site involves Glu-321.

Belongs to the MurB family. Requires FAD as cofactor.

The protein localises to the cytoplasm. It carries out the reaction UDP-N-acetyl-alpha-D-muramate + NADP(+) = UDP-N-acetyl-3-O-(1-carboxyvinyl)-alpha-D-glucosamine + NADPH + H(+). It functions in the pathway cell wall biogenesis; peptidoglycan biosynthesis. Its function is as follows. Cell wall formation. The polypeptide is UDP-N-acetylenolpyruvoylglucosamine reductase (Trichormus variabilis (strain ATCC 29413 / PCC 7937) (Anabaena variabilis)).